Here is a 324-residue protein sequence, read N- to C-terminus: MFNFANFYKLIAQDTILQPWLNTLPQQLTDWQNAEHGDIERWLKALKKIPEGCAENIDLKTSVTLSNNSPLIDGERKKLESLLRTFHPWRKGPFTVHDIHIDTEWRSDWKWDRVLPHLSPLKNRSILDVGCGNGYHMLRMLGEGARLCVGIDPSHLFLVQFEAIRKLMGNDQRAHLLPLGIEQLPELNAFDTVFSMGVLYHRRSPLDHLILLKNQLVAGGELVLETLVIDGDENAVLMPVDRYAQMRNVYFFPSAKALKVWLESVGFIDVKIVDECVTTTGEQRSTEWMKHNSLPEYLDPTDSSKTIEGHPAPKRAILIARKPD.

Residues Lys-91, Trp-105, Lys-110, Gly-130, 152–154 (DPS), 181–182 (IE), Met-196, Tyr-200, and Arg-315 each bind carboxy-S-adenosyl-L-methionine.

The protein belongs to the class I-like SAM-binding methyltransferase superfamily. CmoB family. Homotetramer.

The catalysed reaction is carboxy-S-adenosyl-L-methionine + 5-hydroxyuridine(34) in tRNA = 5-carboxymethoxyuridine(34) in tRNA + S-adenosyl-L-homocysteine + H(+). In terms of biological role, catalyzes carboxymethyl transfer from carboxy-S-adenosyl-L-methionine (Cx-SAM) to 5-hydroxyuridine (ho5U) to form 5-carboxymethoxyuridine (cmo5U) at position 34 in tRNAs. The protein is tRNA U34 carboxymethyltransferase of Aliivibrio salmonicida (strain LFI1238) (Vibrio salmonicida (strain LFI1238)).